We begin with the raw amino-acid sequence, 524 residues long: Homeobox protein engrailed-like SMOX-2 (524 aa).

Residues 194–218 (SSSSSSSSSSSSSSSSSSCSTNSSS) form a disordered region. The homeobox DNA-binding region spans 423-482 (LKRPRTSFTVPQLKRLSQEFEKNRYLDELRRKKLATELDLRESQVKIWFQNKRAKTKKAS).

The protein belongs to the engrailed homeobox family.

Its subcellular location is the nucleus. This chain is Homeobox protein engrailed-like SMOX-2 (SMOX-2), found in Schistosoma mansoni (Blood fluke).